The chain runs to 85 residues: Putative membrane protein insertion efficiency factor (85 aa).

This sequence belongs to the UPF0161 family.

The protein resides in the cell membrane. Functionally, could be involved in insertion of integral membrane proteins into the membrane. This Buchnera aphidicola subsp. Schizaphis graminum (strain Sg) protein is Putative membrane protein insertion efficiency factor.